An 81-amino-acid polypeptide reads, in one-letter code: Photosystem I iron-sulfur center (81 aa).

4Fe-4S ferredoxin-type domains are found at residues 2-31 (SHAV…MVPW) and 39-68 (IAAS…IRVY). [4Fe-4S] cluster contacts are provided by Cys11, Cys14, Cys17, Cys21, Cys48, Cys51, Cys54, and Cys58.

As to quaternary structure, the cyanobacterial PSI reaction center is composed of one copy each of PsaA,B,C,D,E,F,I,J,K,L,M and X, and forms trimeric complexes. The cofactor is [4Fe-4S] cluster.

Its subcellular location is the cellular thylakoid membrane. It carries out the reaction reduced [plastocyanin] + hnu + oxidized [2Fe-2S]-[ferredoxin] = oxidized [plastocyanin] + reduced [2Fe-2S]-[ferredoxin]. Apoprotein for the two 4Fe-4S centers FA and FB of photosystem I (PSI); essential for photochemical activity. FB is the terminal electron acceptor of PSI, donating electrons to ferredoxin. The C-terminus interacts with PsaA/B/D and helps assemble the protein into the PSI complex. Required for binding of PsaD and PsaE to PSI. PSI is a plastocyanin/cytochrome c6-ferredoxin oxidoreductase, converting photonic excitation into a charge separation, which transfers an electron from the donor P700 chlorophyll pair to the spectroscopically characterized acceptors A0, A1, FX, FA and FB in turn. The protein is Photosystem I iron-sulfur center of Prochlorococcus marinus (strain MIT 9313).